A 642-amino-acid chain; its full sequence is LIM domain kinase 2 (642 aa).

LIM zinc-binding domains lie at Cys12–Asp63 and Cys72–Cys124. One can recognise a PDZ domain in the interval Leu152–Pro239. The segment at Arg282–Leu304 is disordered. Residues Arg286 to Leu304 show a composition bias toward low complexity. The Protein kinase domain occupies Leu331–Leu608. Residues Leu337–Ala345 and Lys360 each bind ATP. The active site involves Asp451. Thr505 carries the post-translational modification Phosphothreonine.

Belongs to the protein kinase superfamily. TKL Ser/Thr protein kinase family. Binds ROCK1 and LKAP. Expressed predominantly in the lung, and faintly in the kidney, liver, brain, spleen, gizzard, and intestine.

The protein resides in the cytoplasm. It localises to the cytoskeleton. The protein localises to the spindle. Its subcellular location is the microtubule organizing center. It is found in the centrosome. The catalysed reaction is L-seryl-[protein] + ATP = O-phospho-L-seryl-[protein] + ADP + H(+). It carries out the reaction L-threonyl-[protein] + ATP = O-phospho-L-threonyl-[protein] + ADP + H(+). Serine/threonine-protein kinase that plays an essential role in the regulation of actin filament dynamics. Acts downstream of several Rho family GTPase signal transduction pathways. Involved in astral microtubule organization and mitotic spindle orientation during early stages of mitosis by mediating phosphorylation of TPPP. The sequence is that of LIM domain kinase 2 (LIMK2) from Gallus gallus (Chicken).